Reading from the N-terminus, the 735-residue chain is Polycomb protein sop-2 (735 aa).

Residues 1–15 (MSSNLTSNEMSSTSA) are compositionally biased toward polar residues. 3 disordered regions span residues 1–59 (MSSN…SSSS), 223–288 (AARS…APAA), and 300–534 (PQES…PVLQ). Residues 224–503 (ARSSRMAARR…APATPATPAS (280 aa)) are RNA-binding. A compositionally biased stretch (low complexity) spans 239 to 288 (YRGAFRGAARGAPSRRPAPAAEVAPETPVAAPMAPAAPAAPATPEAAPAA). Composition is skewed to basic and acidic residues over residues 317 to 355 (DTSK…DGGR) and 389 to 398 (RAAEKKKPED). Over residues 399–413 (SDAAEEQEVEMEVDN) the composition is skewed to acidic residues. Residues 450-470 (VEPKKEPVDEPAEKIPKRSEA) show a composition bias toward basic and acidic residues. Positions 471–504 (APEVPATATTKEAPPSTSSSPPDAPATPATPASS) are enriched in low complexity. Polar residues predominate over residues 520–534 (LTGSPPESETPPVLQ). The tract at residues 621–712 (LVENNHEATL…YGTEVLNHYR (92 aa)) is SAM-like.

In terms of assembly, homodimer. Interacts with ubc-9. Binds through its N-terminal region to the N-terminal region of sor-1. In terms of processing, sumoylated by ubc-9. Sumoylation is required for the transcriptional regulation of homeotic genes. Widely expressed. Weakly expressed in most somatic cells of 50-cell stage embryos. At 200 cell stage, it is strongly expressed. By comma stage, it is expressed in most somatic cells.

The protein resides in the nucleus. In terms of biological role, polycomb group (PcG) protein. PcG proteins act by forming multiprotein complexes, which are required to maintain the transcriptionally repressive state of homeotic genes throughout development. PcG proteins are not required to initiate repression, but to maintain it during later stages of development. Also required to repress expression of other genes and for localization of sor-1. Binds RNA. The chain is Polycomb protein sop-2 (sop-2) from Caenorhabditis elegans.